Consider the following 228-residue polypeptide: Superoxide dismutase [Mn] (228 aa).

The signal sequence occupies residues 1 to 23; sequence MTRSLKTTLILLASSVISMSALA. Mn(2+)-binding residues include H49, H100, D188, and H192.

Belongs to the iron/manganese superoxide dismutase family. It depends on Mn(2+) as a cofactor.

Its subcellular location is the periplasm. The enzyme catalyses 2 superoxide + 2 H(+) = H2O2 + O2. Functionally, destroys superoxide anion radicals which are normally produced within the cells and which are toxic to biological systems. The polypeptide is Superoxide dismutase [Mn] (sodA) (Acinetobacter baylyi (strain ATCC 33305 / BD413 / ADP1)).